A 274-amino-acid chain; its full sequence is NADPH-dependent 7-cyano-7-deazaguanine reductase (274 aa).

80–82 (VES) is a binding site for substrate. 82 to 83 (SK) serves as a coordination point for NADPH. The Thioimide intermediate role is filled by Cys181. The active-site Proton donor is the Asp188. A substrate-binding site is contributed by 220–221 (HE). 249–250 (RG) serves as a coordination point for NADPH.

It belongs to the GTP cyclohydrolase I family. QueF type 2 subfamily. In terms of assembly, homodimer.

It is found in the cytoplasm. It carries out the reaction 7-aminomethyl-7-carbaguanine + 2 NADP(+) = 7-cyano-7-deazaguanine + 2 NADPH + 3 H(+). The protein operates within tRNA modification; tRNA-queuosine biosynthesis. Its function is as follows. Catalyzes the NADPH-dependent reduction of 7-cyano-7-deazaguanine (preQ0) to 7-aminomethyl-7-deazaguanine (preQ1). The polypeptide is NADPH-dependent 7-cyano-7-deazaguanine reductase (Burkholderia lata (strain ATCC 17760 / DSM 23089 / LMG 22485 / NCIMB 9086 / R18194 / 383)).